A 417-amino-acid chain; its full sequence is uncharacterized protein (417 aa).

Disordered stretches follow at residues 44–83 and 325–346; these read FTNEQNEEDSSNYSTSGYDSSAETISANSSPINRSGVRSR and VQSARKNQKKGRKNRKVEPPKE. The span at 54–64 shows a compositional bias: low complexity; that stretch reads SNYSTSGYDSS. The segment covering 65 to 76 has biased composition (polar residues); the sequence is AETISANSSPIN. A compositionally biased stretch (basic residues) spans 326–339; it reads QSARKNQKKGRKNR. The helical transmembrane segment at 362 to 382 threads the bilayer; that stretch reads FLIIGVYVLVFIYVCTNVLTV.

It is found in the membrane. This is an uncharacterized protein from Caenorhabditis elegans.